A 168-amino-acid chain; its full sequence is Putative peroxiredoxin prxA (168 aa).

The Thioredoxin domain occupies 4-158 (LKAGDSFPAD…LEPAKNHLEF (155 aa)). The active-site Cysteine sulfenic acid (-SOH) intermediate is Cys-61.

The protein belongs to the peroxiredoxin family. Prx5 subfamily. As to quaternary structure, homodimer; disulfide-linked, upon oxidation. Interacts with thioredoxin trxA.

It carries out the reaction a hydroperoxide + [thioredoxin]-dithiol = an alcohol + [thioredoxin]-disulfide + H2O. Its function is as follows. Thiol-specific peroxidase that catalyzes the reduction of hydrogen peroxide and organic hydroperoxides to water and alcohols, respectively. Plays a role in cell protection against oxidative stress by detoxifying peroxides and as sensor of hydrogen peroxide-mediated signaling events. Involved in osmoadaptation. The polypeptide is Putative peroxiredoxin prxA (Emericella nidulans (strain FGSC A4 / ATCC 38163 / CBS 112.46 / NRRL 194 / M139) (Aspergillus nidulans)).